A 320-amino-acid polypeptide reads, in one-letter code: Malate dehydrogenase (320 aa).

NAD(+) contacts are provided by residues 10–15 (GAGQIG) and Asp34. Residues Arg83 and Arg89 each contribute to the substrate site. NAD(+) is bound by residues Asn96 and 119 to 121 (ITN). Substrate contacts are provided by Asn121 and Arg152. Residue His176 is the Proton acceptor of the active site.

The protein belongs to the LDH/MDH superfamily. MDH type 3 family.

The enzyme catalyses (S)-malate + NAD(+) = oxaloacetate + NADH + H(+). Its function is as follows. Catalyzes the reversible oxidation of malate to oxaloacetate. This chain is Malate dehydrogenase, found in Cereibacter sphaeroides (strain ATCC 17029 / ATH 2.4.9) (Rhodobacter sphaeroides).